The primary structure comprises 143 residues: Small ribosomal subunit protein uS11c (143 aa).

This sequence belongs to the universal ribosomal protein uS11 family. Part of the 30S ribosomal subunit.

It localises to the plastid. The protein localises to the chloroplast. The sequence is that of Small ribosomal subunit protein uS11c from Hordeum vulgare (Barley).